The sequence spans 303 residues: Acetylglutamate kinase (303 aa).

Substrate is bound by residues 67–68 (GG), R89, and N193.

Belongs to the acetylglutamate kinase family. ArgB subfamily.

It is found in the cytoplasm. The enzyme catalyses N-acetyl-L-glutamate + ATP = N-acetyl-L-glutamyl 5-phosphate + ADP. It participates in amino-acid biosynthesis; L-arginine biosynthesis; N(2)-acetyl-L-ornithine from L-glutamate: step 2/4. Catalyzes the ATP-dependent phosphorylation of N-acetyl-L-glutamate. In Acinetobacter baylyi (strain ATCC 33305 / BD413 / ADP1), this protein is Acetylglutamate kinase.